The chain runs to 162 residues: Putative ankyrin repeat protein R664 (162 aa).

ANK repeat units follow at residues 10–40 (KKLV…NVNY), 47–78 (NDTP…DVNY), and 82–111 (YHET…NPYL).

This Acanthamoeba polyphaga mimivirus (APMV) protein is Putative ankyrin repeat protein R664.